The chain runs to 468 residues: Cysteine--tRNA ligase (468 aa).

Residue cysteine 33 coordinates Zn(2+). The 'HIGH' region motif lies at 35 to 45; that stretch reads ATVQGLPHIGH. 3 residues coordinate Zn(2+): cysteine 211, histidine 236, and glutamate 240. Positions 267–271 match the 'KMSKS' region motif; that stretch reads KMSKS. Position 270 (lysine 270) interacts with ATP.

The protein belongs to the class-I aminoacyl-tRNA synthetase family. Monomer. Zn(2+) serves as cofactor.

Its subcellular location is the cytoplasm. It catalyses the reaction tRNA(Cys) + L-cysteine + ATP = L-cysteinyl-tRNA(Cys) + AMP + diphosphate. This chain is Cysteine--tRNA ligase, found in Mycobacterium avium (strain 104).